Consider the following 245-residue polypeptide: Eukaryotic translation initiation factor 6 (245 aa).

A phosphoserine; by CK1 mark is found at Ser-174 and Ser-175. Position 231 is a phosphoserine (Ser-231).

The protein belongs to the eIF-6 family. In terms of assembly, monomer. Associates with the 60S ribosomal subunit. In terms of processing, phosphorylation at Ser-174 and Ser-175 promotes nuclear export.

The protein resides in the cytoplasm. It localises to the nucleus. It is found in the nucleolus. Its function is as follows. Binds to the 60S ribosomal subunit and prevents its association with the 40S ribosomal subunit to form the 80S initiation complex in the cytoplasm. Is also involved in ribosome biogenesis. Associates with pre-60S subunits in the nucleus and is involved in its nuclear export. Cytoplasmic release of TIF6 from 60S subunits and nuclear relocalization is promoted by the GTPase RIA1/EFL1 and by SDO1. Also required for pre-rRNA processing. The chain is Eukaryotic translation initiation factor 6 from Saccharomyces cerevisiae (strain ATCC 204508 / S288c) (Baker's yeast).